A 393-amino-acid chain; its full sequence is S-adenosylmethionine synthase 1 (393 aa).

Position 9 (Glu-9) interacts with Mg(2+). His-15 contacts ATP. Glu-43 contributes to the K(+) binding site. 2 residues coordinate L-methionine: Glu-56 and Gln-99. Residues Asp-167–Lys-169, Ser-235–Phe-238, Asp-246, Arg-252–Lys-253, Ala-269, Lys-273, and Lys-277 contribute to the ATP site. Residue Asp-246 participates in L-methionine binding. Residue Lys-277 participates in L-methionine binding.

The protein belongs to the AdoMet synthase family. Homotetramer. Mn(2+) is required as a cofactor. It depends on Mg(2+) as a cofactor. Co(2+) serves as cofactor. The cofactor is K(+).

It localises to the cytoplasm. The enzyme catalyses L-methionine + ATP + H2O = S-adenosyl-L-methionine + phosphate + diphosphate. Its pathway is amino-acid biosynthesis; S-adenosyl-L-methionine biosynthesis; S-adenosyl-L-methionine from L-methionine: step 1/1. Catalyzes the formation of S-adenosylmethionine from methionine and ATP. The reaction comprises two steps that are both catalyzed by the same enzyme: formation of S-adenosylmethionine (AdoMet) and triphosphate, and subsequent hydrolysis of the triphosphate. The sequence is that of S-adenosylmethionine synthase 1 (SAMS1) from Brassica juncea (Indian mustard).